The following is a 432-amino-acid chain: D-amino acid dehydrogenase (432 aa).

Residue valine 3–tryptophan 17 participates in FAD binding.

It belongs to the DadA oxidoreductase family. Requires FAD as cofactor.

The enzyme catalyses a D-alpha-amino acid + A + H2O = a 2-oxocarboxylate + AH2 + NH4(+). The protein operates within amino-acid degradation; D-alanine degradation; NH(3) and pyruvate from D-alanine: step 1/1. In terms of biological role, oxidative deamination of D-amino acids. The sequence is that of D-amino acid dehydrogenase from Salmonella paratyphi C (strain RKS4594).